The chain runs to 520 residues: Putative tyrosine carboxypeptidase MATCAP2 (520 aa).

Residues 116 to 153 (EEKKYHSQKQSSSTYSKRCRKPSKSPNTSRSKDPRRMK) are disordered. Position 331 (His-331) interacts with Zn(2+). Catalysis depends on Glu-332, which acts as the Nucleophile. Residues His-336 and Glu-367 each contribute to the Zn(2+) site.

Zn(2+) serves as cofactor.

Putative tyrosine carboxypeptidase. The protein is Putative tyrosine carboxypeptidase MATCAP2 of Homo sapiens (Human).